The sequence spans 148 residues: Cell division protein SepF (148 aa).

The interval 1–59 (MNNKFKDFFGFGDNDSYEERDAYEEHYDEQEEMQNSNRPTNSRDSNVVSIKAGQAGSGP) is disordered. Polar residues predominate over residues 33–48 (MQNSNRPTNSRDSNVV).

This sequence belongs to the SepF family. As to quaternary structure, homodimer. Interacts with FtsZ.

The protein resides in the cytoplasm. Functionally, cell division protein that is part of the divisome complex and is recruited early to the Z-ring. Probably stimulates Z-ring formation, perhaps through the cross-linking of FtsZ protofilaments. Its function overlaps with FtsA. The chain is Cell division protein SepF from Lactobacillus delbrueckii subsp. bulgaricus (strain ATCC BAA-365 / Lb-18).